A 129-amino-acid polypeptide reads, in one-letter code: uncharacterized protein (129 aa).

Positions 6–129 (QVHHIAIIAT…DGLPLELYEQ (124 aa)) constitute a VOC domain. A divalent metal cation contacts are provided by H9, E57, H78, and E125.

To B.subtilis YwkD.

This is an uncharacterized protein from Escherichia coli (strain K12).